A 61-amino-acid chain; its full sequence is Protein translocase subunit SecE (61 aa).

A helical transmembrane segment spans residues 38–58 (GIGMILIGLIGLVIRMIGYLI).

The protein belongs to the SecE/SEC61-gamma family. As to quaternary structure, component of the Sec protein translocase complex. Heterotrimer consisting of SecY (alpha), SecG (beta) and SecE (gamma) subunits. The heterotrimers can form oligomers, although 1 heterotrimer is thought to be able to translocate proteins. Interacts with the ribosome. May interact with SecDF, and other proteins may be involved.

The protein localises to the cell membrane. Functionally, essential subunit of the Sec protein translocation channel SecYEG. Clamps together the 2 halves of SecY. May contact the channel plug during translocation. The protein is Protein translocase subunit SecE of Thermococcus onnurineus (strain NA1).